We begin with the raw amino-acid sequence, 485 residues long: Bifunctional protein GlmU (485 aa).

The pyrophosphorylase stretch occupies residues methionine 1–arginine 241. UDP-N-acetyl-alpha-D-glucosamine contacts are provided by residues leucine 13–glycine 16, lysine 27, glutamine 84, and glycine 89–threonine 90. Aspartate 114 is a Mg(2+) binding site. UDP-N-acetyl-alpha-D-glucosamine contacts are provided by glycine 151, glutamate 166, asparagine 181, and asparagine 239. Asparagine 239 contacts Mg(2+). Residues valine 242 to glycine 262 are linker. The N-acetyltransferase stretch occupies residues glycine 263 to glycine 485. UDP-N-acetyl-alpha-D-glucosamine is bound by residues arginine 344 and lysine 362. The Proton acceptor role is filled by histidine 374. Tyrosine 377 and asparagine 388 together coordinate UDP-N-acetyl-alpha-D-glucosamine. Residues alanine 391, asparagine 397 to tyrosine 398, serine 416, and alanine 434 each bind acetyl-CoA. A disordered region spans residues arginine 465–glycine 485. Residues alanine 469 to glutamine 478 show a composition bias toward low complexity.

In the N-terminal section; belongs to the N-acetylglucosamine-1-phosphate uridyltransferase family. This sequence in the C-terminal section; belongs to the transferase hexapeptide repeat family. In terms of assembly, homotrimer. The cofactor is Mg(2+).

The protein localises to the cytoplasm. The catalysed reaction is alpha-D-glucosamine 1-phosphate + acetyl-CoA = N-acetyl-alpha-D-glucosamine 1-phosphate + CoA + H(+). The enzyme catalyses N-acetyl-alpha-D-glucosamine 1-phosphate + UTP + H(+) = UDP-N-acetyl-alpha-D-glucosamine + diphosphate. Its pathway is nucleotide-sugar biosynthesis; UDP-N-acetyl-alpha-D-glucosamine biosynthesis; N-acetyl-alpha-D-glucosamine 1-phosphate from alpha-D-glucosamine 6-phosphate (route II): step 2/2. The protein operates within nucleotide-sugar biosynthesis; UDP-N-acetyl-alpha-D-glucosamine biosynthesis; UDP-N-acetyl-alpha-D-glucosamine from N-acetyl-alpha-D-glucosamine 1-phosphate: step 1/1. It functions in the pathway bacterial outer membrane biogenesis; LPS lipid A biosynthesis. In terms of biological role, catalyzes the last two sequential reactions in the de novo biosynthetic pathway for UDP-N-acetylglucosamine (UDP-GlcNAc). The C-terminal domain catalyzes the transfer of acetyl group from acetyl coenzyme A to glucosamine-1-phosphate (GlcN-1-P) to produce N-acetylglucosamine-1-phosphate (GlcNAc-1-P), which is converted into UDP-GlcNAc by the transfer of uridine 5-monophosphate (from uridine 5-triphosphate), a reaction catalyzed by the N-terminal domain. The polypeptide is Bifunctional protein GlmU (Corynebacterium glutamicum (strain R)).